The following is a 159-amino-acid chain: Small ribosomal subunit protein uS9 (159 aa).

The protein belongs to the universal ribosomal protein uS9 family.

The protein is Small ribosomal subunit protein uS9 of Rickettsia rickettsii (strain Iowa).